Consider the following 387-residue polypeptide: Protein TsgA homolog (387 aa).

12 helical membrane passes run 11–31, 47–67, 76–96, 101–121, 134–154, 160–180, 205–225, 243–263, 271–291, 299–319, 331–351, and 358–378; these read WISF…GMIM, NIFT…SWLI, LIFG…STSI, INIF…TFII, LLLT…ISAY, ILWY…FILT, IILL…FISW, VLVS…SFII, MFIF…YSKS, IISL…LASL, LILF…SPIV, and TTLI…CIIF.

The protein belongs to the major facilitator superfamily. TsgA family.

The protein resides in the cell membrane. The protein is Protein TsgA homolog of Buchnera aphidicola subsp. Schizaphis graminum (strain Sg).